A 574-amino-acid chain; its full sequence is 2-succinyl-5-enolpyruvyl-6-hydroxy-3-cyclohexene-1-carboxylate synthase (574 aa).

Belongs to the TPP enzyme family. MenD subfamily. In terms of assembly, homodimer. It depends on Mg(2+) as a cofactor. Requires Mn(2+) as cofactor. The cofactor is thiamine diphosphate.

The enzyme catalyses isochorismate + 2-oxoglutarate + H(+) = 5-enolpyruvoyl-6-hydroxy-2-succinyl-cyclohex-3-ene-1-carboxylate + CO2. The protein operates within quinol/quinone metabolism; 1,4-dihydroxy-2-naphthoate biosynthesis; 1,4-dihydroxy-2-naphthoate from chorismate: step 2/7. It functions in the pathway cofactor biosynthesis; phylloquinone biosynthesis. Catalyzes the thiamine diphosphate-dependent decarboxylation of 2-oxoglutarate and the subsequent addition of the resulting succinic semialdehyde-thiamine pyrophosphate anion to isochorismate to yield 2-succinyl-5-enolpyruvyl-6-hydroxy-3-cyclohexene-1-carboxylate (SEPHCHC). The chain is 2-succinyl-5-enolpyruvyl-6-hydroxy-3-cyclohexene-1-carboxylate synthase from Synechococcus sp. (strain RCC307).